An 85-amino-acid polypeptide reads, in one-letter code: UPF0291 protein str0508 (85 aa).

The segment at 62 to 85 is disordered; it reads TPEKLRQVQREKGLHGRSLDDPES.

It belongs to the UPF0291 family.

The protein resides in the cytoplasm. This is UPF0291 protein str0508 from Streptococcus thermophilus (strain CNRZ 1066).